Here is a 168-residue protein sequence, read N- to C-terminus: G/U mismatch-specific DNA glycosylase (168 aa).

This sequence belongs to the uracil-DNA glycosylase (UDG) superfamily. TDG/mug family. Binds DNA as a monomer.

It localises to the cytoplasm. It carries out the reaction Specifically hydrolyzes mismatched double-stranded DNA and polynucleotides, releasing free uracil.. Its function is as follows. Excises ethenocytosine and uracil, which can arise by alkylation or deamination of cytosine, respectively, from the corresponding mispairs with guanine in ds-DNA. It is capable of hydrolyzing the carbon-nitrogen bond between the sugar-phosphate backbone of the DNA and the mispaired base. The complementary strand guanine functions in substrate recognition. Required for DNA damage lesion repair in stationary-phase cells. The chain is G/U mismatch-specific DNA glycosylase from Klebsiella pneumoniae (strain 342).